The sequence spans 180 residues: Trafficking protein particle complex subunit 3 (180 aa).

The S-palmitoyl cysteine moiety is linked to residue Cys68.

Belongs to the TRAPP small subunits family. BET3 subfamily. As to quaternary structure, homodimer. Component of the multisubunit transport protein particle (TRAPP) complex, which includes at least TRAPPC2, TRAPPC2L, TRAPPC3, TRAPPC3L, TRAPPC4, TRAPPC5, TRAPPC8, TRAPPC9, TRAPPC10, TRAPPC11 and TRAPPC12. Heterodimer with TRAPPC6A. The heterodimer TRAPPC3-TRAPPC6A interacts with TRAPPC2L. Heterodimer with TRAPPC6b. The heterodimer TRAPPC6B-TRAPPC3 interacts with TRAPPC1 likely providing a core for TRAPP complex formation. In terms of tissue distribution, widely expressed. Expressed in lung, heart, liver, spleen, brain and kidney.

It localises to the golgi apparatus. The protein localises to the cis-Golgi network. The protein resides in the endoplasmic reticulum. Its function is as follows. May play a role in vesicular transport from endoplasmic reticulum to Golgi. This chain is Trafficking protein particle complex subunit 3, found in Mus musculus (Mouse).